The following is a 365-amino-acid chain: Chorismate synthase (365 aa).

NADP(+) is bound by residues Arg-48 and Arg-54. FMN-binding positions include 125–127, 238–239, Gly-278, 293–297, and Arg-319; these read RSS, NA, and KPTSS.

Belongs to the chorismate synthase family. As to quaternary structure, homotetramer. FMNH2 is required as a cofactor.

It catalyses the reaction 5-O-(1-carboxyvinyl)-3-phosphoshikimate = chorismate + phosphate. It functions in the pathway metabolic intermediate biosynthesis; chorismate biosynthesis; chorismate from D-erythrose 4-phosphate and phosphoenolpyruvate: step 7/7. Catalyzes the anti-1,4-elimination of the C-3 phosphate and the C-6 proR hydrogen from 5-enolpyruvylshikimate-3-phosphate (EPSP) to yield chorismate, which is the branch point compound that serves as the starting substrate for the three terminal pathways of aromatic amino acid biosynthesis. This reaction introduces a second double bond into the aromatic ring system. The sequence is that of Chorismate synthase from Alteromonas mediterranea (strain DSM 17117 / CIP 110805 / LMG 28347 / Deep ecotype).